A 166-amino-acid polypeptide reads, in one-letter code: Protein SprT (166 aa).

In terms of domain architecture, SprT-like spans 19 to 164; sequence REHLAKANLK…CVHCGDLLVA (146 aa). His-78 is a Zn(2+) binding site. Glu-79 is an active-site residue. Residue His-82 participates in Zn(2+) binding.

Belongs to the SprT family. Zn(2+) serves as cofactor.

It is found in the cytoplasm. The sequence is that of Protein SprT from Klebsiella pneumoniae (strain 342).